Here is a 232-residue protein sequence, read N- to C-terminus: uncharacterized protein (232 aa).

Helical transmembrane passes span 17 to 37, 54 to 74, 84 to 104, 107 to 127, 138 to 158, 161 to 181, and 203 to 223; these read FLAK…VFAY, MSFM…SGAL, ALFL…FMIY, GSIV…SVYG, GSYL…NMFF, SGLN…LTAY, and MAVV…LYLL.

Belongs to the BI1 family.

It localises to the cell membrane. This is an uncharacterized protein from Borreliella burgdorferi (strain ATCC 35210 / DSM 4680 / CIP 102532 / B31) (Borrelia burgdorferi).